We begin with the raw amino-acid sequence, 2009 residues long: MEQTVLVPPGPDSFNFFTRESLAAIERRIAEEKAKNPKPDKKDDDENGPKPNSDLEAGKNLPFIYGDIPPEMVSEPLEDLDPYYINKKTFIVLNKGKAIFRFSATSALYILTPFNPLRKIAIKILVHSLFSMLIMCTILTNCVFMTMSNPPDWTKNVEYTFTGIYTFESLIKIIARGFCLEDFTFLRDPWNWLDFTVITFAYVTEFVDLGNVSALRTFRVLRALKTISVIPGLKTIVGALIQSVKKLSDVMILTVFCLSVFALIGLQLFMGNLRNKCVQWPPTNASLEEHSIEKNVTTDYNGTLVNETVFEFDWKSYIQDSRYHYFLEGVLDALLCGNSSDAGQCPEGYMCVKAGRNPNYGYTSFDTFSWAFLSLFRLMTQDFWENLYQLTLRAAGKTYMIFFVLVIFLGSFYLINLILAVVAMAYEEQNQATLEEAEQKEAEFQQMLEQLKKQQEAAQQAAAATASEHSREPSAAGRLSDSSSEASKLSSKSAKERRNRRKKRKQKEQSGGEEKDDDEFHKSESEDSIRRKGFRFSIEGNRLTYEKRYSSPHQSLLSIRGSLFSPRRNSRTSLFSFRGRAKDVGSENDFADDEHSTFEDNESRRDSLFVPRRHGERRNSNLSQTSRSSRMLAGLPANGKMHSTVDCNGVVSLVGGPSVPTSPVGQLLPEVIIDKPATDDNGTTTETEMRKRRSSSFHVSMDFLEDPSQRQRAMSIASILTNTVEELEESRQKCPPCWYKFSNIFLIWDCSPYWLKVKHIVNLVVMDPFVDLAITICIVLNTLFMAMEHYPMTEHFNHVLTVGNLVFTGIFTAEMFLKIIAMDPYYYFQEGWNIFDGFIVTLSLVELGLANVEGLSVLRSFRLLRVFKLAKSWPTLNMLIKIIGNSVGALGNLTLVLAIIVFIFAVVGMQLFGKSYKDCVCKIATDCKLPRWHMNDFFHSFLIVFRVLCGEWIETMWDCMEVAGQAMCLTVFMMVMVIRNLVVLNLFLALLLSSFSADNLAATDDDNEMNNLQIAVDRMHKGVAYVKRKIYEFIQQSFVRKQKILDEIKPLDDLNNRKDNCTSNHTTEIGKDLDCLKDVNGTTSGIGTGSSVEKYIIDESDYMSFINNPSLTVTVPIAVGESDFENLNTEDFSSESDLEESKEKLNESSSSSEGSTVDIGAPAEEQPVMEPEETLEPEACFTEGCVQRFKCCQISVEEGRGKQWWNLRRTCFRIVEHNWFETFIVFMILLSSGALAFEDIYIDQRKTIKTMLEYADKVFTYIFILEMLLKWVAYGYQTYFTNAWCWLDFLIVDVSLVSLTANALGYSELGAIKSLRTLRALRPLRALSRFEGMRVVVNALLGAIPSIMNVLLVCLIFWLIFSIMGVNLFAGKFYHCVNTTTGDTFEITEVNNHSDCLKLIERNETARWKNVKVNFDNVGFGYLSLLQVATFKGWMDIMYAAVDSRNVELQPKYEESLYMYLYFVIFIIFGSFFTLNLFIGVIIDNFNQQKKKFGGQDIFMTEEQKKYYNAMKKLGSKKPQKPIPRPGNKFQGMVFDFVTRQVFDISIMILICLNMVTMMVETDDQSDYVTSILSRINLVFIVLFTGECVLKLISLRHYYFTIGWNIFDFVVVILSIVGMFLAELIEKYFVSPTLFRVIRLARIGRILRLIKGAKGIRTLLFALMMSLPALFNIGLLLFLVMFIYAIFGMSNFAYVKREVGIDDMFNFETFGNSMICLFQITTSAGWDGLLAPILNSKPPDCDPNKVNPGSSVKGDCGNPSVGIFFFVSYIIISFLVVVNMYIAVILENFSVATEESAEPLSEDDFEMFYEVWEKFDPDATQFMEFEKLSQFAAALEPPLNLPQPNKLQLIAMDLPMVSGDRIHCLDILFAFTKRVLGESGEMDALRIQMEERFMASNPSKVSYQPITTTLKRKQEEVSAVIIQRAYRRHLLKRTVKQASFTYNKNKLKGGANLLVKEDMIIDRINENSITEKTDLTMSTAACPPSYDRVTKPIVEKHEQEGKDEKAKGK.

Topologically, residues 1–128 (MEQTVLVPPG…KIAIKILVHS (128 aa)) are cytoplasmic. A compositionally biased stretch (basic and acidic residues) spans 28–48 (RIAEEKAKNPKPDKKDDDENG). The disordered stretch occupies residues 28-60 (RIAEEKAKNPKPDKKDDDENGPKPNSDLEAGKN). An I repeat occupies 110–454 (ILTPFNPLRK…QQMLEQLKKQ (345 aa)). A helical transmembrane segment spans residues 129-146 (LFSMLIMCTILTNCVFMT). At 147 to 152 (MSNPPD) the chain is on the extracellular side. The chain crosses the membrane as a helical span at residues 153 to 177 (WTKNVEYTFTGIYTFESLIKIIARG). The Cytoplasmic segment spans residues 178-188 (FCLEDFTFLRD). The helical transmembrane segment at 189–205 (PWNWLDFTVITFAYVTE) threads the bilayer. Residues 206–213 (FVDLGNVS) lie on the Extracellular side of the membrane. N-linked (GlcNAc...) asparagine glycosylation occurs at Asn211. Residues 214 to 235 (ALRTFRVLRALKTISVIPGLKT) form a helical membrane-spanning segment. Over 236–245 (IVGALIQSVK) the chain is Cytoplasmic. A helical transmembrane segment spans residues 246–269 (KLSDVMILTVFCLSVFALIGLQLF). The Extracellular portion of the chain corresponds to 270–369 (MGNLRNKCVQ…YGYTSFDTFS (100 aa)). Intrachain disulfides connect Cys277–Cys345 and Cys336–Cys351. N-linked (GlcNAc...) asparagine glycosylation is found at Asn284, Asn295, Asn301, Asn306, and Asn338. An intramembrane region (pore-forming) is located at residues 370-384 (WAFLSLFRLMTQDFW). Residues 385–397 (ENLYQLTLRAAGK) are Extracellular-facing. The helical transmembrane segment at 398 to 423 (TYMIFFVLVIFLGSFYLINLILAVVA) threads the bilayer. The Cytoplasmic segment spans residues 424–768 (MAYEEQNQAT…HIVNLVVMDP (345 aa)). The tract at residues 458–528 (AQQAAAATAS…EFHKSESEDS (71 aa)) is disordered. Position 470 is a phosphoserine (Ser470). A compositionally biased stretch (low complexity) spans 479–492 (LSDSSSEASKLSSK). Positions 495–506 (KERRNRRKKRKQ) are enriched in basic residues. The span at 507–528 (KEQSGGEEKDDDEFHKSESEDS) shows a compositional bias: basic and acidic residues. Phosphoserine is present on residues Ser523, Ser525, Ser550, Ser551, Ser607, and Ser730. Positions 584-628 (VGSENDFADDEHSTFEDNESRRDSLFVPRRHGERRNSNLSQTSRS) are disordered. A compositionally biased stretch (basic and acidic residues) spans 593 to 607 (DEHSTFEDNESRRDS). An II repeat occupies 750-1022 (CSPYWLKVKH…QIAVDRMHKG (273 aa)). A helical transmembrane segment spans residues 769-787 (FVDLAITICIVLNTLFMAM). Over 788–797 (EHYPMTEHFN) the chain is Extracellular. A helical membrane pass occupies residues 798–820 (HVLTVGNLVFTGIFTAEMFLKII). Residues 821–830 (AMDPYYYFQE) are Cytoplasmic-facing. The chain crosses the membrane as a helical span at residues 831 to 849 (GWNIFDGFIVTLSLVELGL). At 850-854 (ANVEG) the chain is on the extracellular side. Residues 855-874 (LSVLRSFRLLRVFKLAKSWP) traverse the membrane as a helical segment. The Cytoplasmic segment spans residues 875-891 (TLNMLIKIIGNSVGALG). The chain crosses the membrane as a helical span at residues 892 to 912 (NLTLVLAIIVFIFAVVGMQLF). At 913-938 (GKSYKDCVCKIATDCKLPRWHMNDFF) the chain is on the extracellular side. A disulfide bridge connects residues Cys921 and Cys927. Positions 939-952 (HSFLIVFRVLCGEW) form an intramembrane region, pore-forming. Residues 953 to 965 (IETMWDCMEVAGQ) lie on the Extracellular side of the membrane. Cys959 and Cys968 are oxidised to a cystine. The helical transmembrane segment at 966 to 992 (AMCLTVFMMVMVIRNLVVLNLFLALLL) threads the bilayer. Residues 993–1218 (SSFSADNLAA…RTCFRIVEHN (226 aa)) are Cytoplasmic-facing. Residues 1129–1163 (TEDFSSESDLEESKEKLNESSSSSEGSTVDIGAPA) are disordered. The stretch at 1200-1514 (RGKQWWNLRR…KKYYNAMKKL (315 aa)) is one III repeat. Residues 1219-1237 (WFETFIVFMILLSSGALAF) form a helical membrane-spanning segment. Residues 1238-1250 (EDIYIDQRKTIKT) are Extracellular-facing. Residues 1251–1276 (MLEYADKVFTYIFILEMLLKWVAYGY) traverse the membrane as a helical segment. The Cytoplasmic segment spans residues 1277-1278 (QT). A helical membrane pass occupies residues 1279 to 1304 (YFTNAWCWLDFLIVDVSLVSLTANAL). Residues 1305–1313 (GYSELGAIK) lie on the Extracellular side of the membrane. Residues 1314–1332 (SLRTLRALRPLRALSRFEG) traverse the membrane as a helical segment. The Cytoplasmic segment spans residues 1333–1345 (MRVVVNALLGAIP). Residues 1346 to 1369 (SIMNVLLVCLIFWLIFSIMGVNLF) form a helical membrane-spanning segment. Topologically, residues 1370–1415 (AGKFYHCVNTTTGDTFEITEVNNHSDCLKLIERNETARWKNVKVNF) are extracellular. Cys1376 and Cys1396 form a disulfide bridge. Asn1378, Asn1392, and Asn1403 each carry an N-linked (GlcNAc...) asparagine glycan. Positions 1416-1433 (DNVGFGYLSLLQVATFKG) form an intramembrane region, pore-forming. The Extracellular segment spans residues 1434–1457 (WMDIMYAAVDSRNVELQPKYEESL). Residues 1458–1483 (YMYLYFVIFIIFGSFFTLNLFIGVII) form a helical membrane-spanning segment. At 1484-1541 (DNFNQQKKKFGGQDIFMTEEQKKYYNAMKKLGSKKPQKPIPRPGNKFQGMVFDFVTRQ) the chain is on the cytoplasmic side. A Phosphoserine; by PKC modification is found at Ser1516. One copy of the IV repeat lies at 1523-1821 (IPRPGNKFQG…WEKFDPDATQ (299 aa)). A helical transmembrane segment spans residues 1542 to 1560 (VFDISIMILICLNMVTMMV). Over 1561–1571 (ETDDQSDYVTS) the chain is Extracellular. The S1-S2 loop of repeat IV stretch occupies residues 1561-1571 (ETDDQSDYVTS). The helical transmembrane segment at 1572-1593 (ILSRINLVFIVLFTGECVLKLI) threads the bilayer. Residues 1594–1601 (SLRHYYFT) are Cytoplasmic-facing. The helical transmembrane segment at 1602-1623 (IGWNIFDFVVVILSIVGMFLAE) threads the bilayer. Residues 1619–1636 (MFLAELIEKYFVSPTLFR) form an S3b-S4 loop of repeat IV region. Residues 1624–1636 (LIEKYFVSPTLFR) are Extracellular-facing. A helical transmembrane segment spans residues 1637–1655 (VIRLARIGRILRLIKGAKG). Over 1656-1665 (IRTLLFALMM) the chain is Cytoplasmic. Residues 1666–1688 (SLPALFNIGLLLFLVMFIYAIFG) traverse the membrane as a helical segment. Residues 1689 to 1711 (MSNFAYVKREVGIDDMFNFETFG) lie on the Extracellular side of the membrane. Residues 1712-1726 (NSMICLFQITTSAGW) constitute an intramembrane region (pore-forming). Topologically, residues 1727–1759 (DGLLAPILNSKPPDCDPNKVNPGSSVKGDCGNP) are extracellular. Cys1741 and Cys1756 are joined by a disulfide. A helical membrane pass occupies residues 1760 to 1788 (SVGIFFFVSYIIISFLVVVNMYIAVILEN). Residues 1789–2009 (FSVATEESAE…EGKDEKAKGK (221 aa)) are Cytoplasmic-facing. In terms of domain architecture, IQ spans 1915 to 1944 (EEVSAVIIQRAYRRHLLKRTVKQASFTYNK). Residues 1986-2009 (YDRVTKPIVEKHEQEGKDEKAKGK) form a disordered region. Positions 1988–2009 (RVTKPIVEKHEQEGKDEKAKGK) are enriched in basic and acidic residues.

The protein belongs to the sodium channel (TC 1.A.1.10) family. Nav1.1/SCN1A subfamily. As to quaternary structure, the Nav1.1 voltage-gated sodium channel consists of an ion-conducting alpha subunit SCN1A which is functional on its own regulated by one or more beta-1 (SCN1B), beta-2 (SCN2B), beta-3 (SCN3B) and beta-4 (SCN4B) subunits. SCN1B and SCN3B are non-covalently associated with SCN1A. SCN2B and SCN4B are disulfide-linked to SCN1A. SCN1B regulates both the expression at the plasma membrane and the voltage dependence of Nav1.1 inactivation. SCN3B and SCN4B reduce Nav1.1 conductance. Probably interacts with TMEM233; modulates the gating properties of NaV1.1. Interacts with FGF13; regulates the steady-state inactivation of Nav.1.1. Phosphorylation at Ser-1516 by PKC in a highly conserved cytoplasmic loop slows inactivation of the sodium channel and reduces peak sodium currents.

It is found in the cell membrane. The enzyme catalyses Na(+)(in) = Na(+)(out). With respect to regulation, activated by the spider toxins Hm1a and Hm1b (H.maculata, AC P60992 and AC P0DOC5) eliciting acute pain and mechanical allodynia. Inhibited by the conotoxin GVIIJ. Its function is as follows. Pore-forming subunit of Nav1.1, a voltage-gated sodium (Nav) channel that directly mediates the depolarizing phase of action potentials in excitable membranes. Navs, also called VGSCs (voltage-gated sodium channels) or VDSCs (voltage-dependent sodium channels), operate by switching between closed and open conformations depending on the voltage difference across the membrane. In the open conformation they allow Na(+) ions to selectively pass through the pore, along their electrochemical gradient. The influx of Na(+) ions provokes membrane depolarization, initiating the propagation of electrical signals throughout cells and tissues. By regulating the excitability of neurons, ensures that they respond appropriately to synaptic inputs, maintaining the balance between excitation and inhibition in brain neural circuits. Nav1.1 plays a role in controlling the excitability and action potential propagation from somatosensory neurons, thereby contributing to the sensory perception of mechanically-induced pain. This is Sodium channel protein type 1 subunit alpha from Rattus norvegicus (Rat).